The sequence spans 802 residues: Elongation factor G, mitochondrial (802 aa).

A mitochondrion-targeting transit peptide spans 1–24; that stretch reads MRCPSLARLPNRALSGLTRSPVRL. Residues 100–387 form the tr-type G domain; it reads SRLRNIGIAA…GVIDYLPNPS (288 aa). Residues 109–116, 185–189, and 239–242 contribute to the GTP site; these read AHIDSGKT, DTPGH, and NKMD.

Belongs to the TRAFAC class translation factor GTPase superfamily. Classic translation factor GTPase family. EF-G/EF-2 subfamily.

It localises to the mitochondrion. The protein operates within protein biosynthesis; polypeptide chain elongation. Its function is as follows. Mitochondrial GTPase that catalyzes the GTP-dependent ribosomal translocation step during translation elongation. During this step, the ribosome changes from the pre-translocational (PRE) to the post-translocational (POST) state as the newly formed A-site-bound peptidyl-tRNA and P-site-bound deacylated tRNA move to the P and E sites, respectively. Catalyzes the coordinated movement of the two tRNA molecules, the mRNA and conformational changes in the ribosome. The polypeptide is Elongation factor G, mitochondrial (mef1) (Aspergillus fumigatus (strain CBS 144.89 / FGSC A1163 / CEA10) (Neosartorya fumigata)).